The chain runs to 326 residues: Acetyl-coenzyme A carboxylase carboxyl transferase subunit alpha (326 aa).

A CoA carboxyltransferase C-terminal domain is found at 46 to 300 (EIEARAAELR…KEALLRHLDE (255 aa)).

The protein belongs to the AccA family. As to quaternary structure, acetyl-CoA carboxylase is a heterohexamer composed of biotin carboxyl carrier protein (AccB), biotin carboxylase (AccC) and two subunits each of ACCase subunit alpha (AccA) and ACCase subunit beta (AccD).

The protein localises to the cytoplasm. The enzyme catalyses N(6)-carboxybiotinyl-L-lysyl-[protein] + acetyl-CoA = N(6)-biotinyl-L-lysyl-[protein] + malonyl-CoA. It functions in the pathway lipid metabolism; malonyl-CoA biosynthesis; malonyl-CoA from acetyl-CoA: step 1/1. Component of the acetyl coenzyme A carboxylase (ACC) complex. First, biotin carboxylase catalyzes the carboxylation of biotin on its carrier protein (BCCP) and then the CO(2) group is transferred by the carboxyltransferase to acetyl-CoA to form malonyl-CoA. In Gloeobacter violaceus (strain ATCC 29082 / PCC 7421), this protein is Acetyl-coenzyme A carboxylase carboxyl transferase subunit alpha.